The chain runs to 528 residues: Butyrophilin subfamily 2 member A2 (528 aa).

Positions 1–29 (MESAAALHFSRPASLLLLLLLSLCALVSA) are cleaved as a signal peptide. The Extracellular portion of the chain corresponds to 30 to 249 (QVTVVGPTDP…SFMPSVSPCA (220 aa)). Residues 31–142 (VTVVGPTDPI…SYDEAILHLI (112 aa)) form the Ig-like V-type domain. N-linked (GlcNAc...) asparagine glycosylation is found at N47, N115, and N121. The cysteines at positions 52 and 126 are disulfide-linked. One can recognise an Ig-like C2-type domain in the interval 150–232 (PLIEMRGHED…NNTLLSQKKE (83 aa)). The chain crosses the membrane as a helical span at residues 250-270 (VALPIVVVILMILFAVCMYWI). Residues 270–320 (INKLQKEKKILSGEKEFERETREIAVKELEKERVQKEEELQVKEKLQEELR) are a coiled coil. Topologically, residues 271–528 (NKLQKEKKIL…LHRVGTHQSL (258 aa)) are cytoplasmic. In terms of domain architecture, B30.2/SPRY spans 311-507 (VKEKLQEELR…IFICPALTGA (197 aa)).

It belongs to the immunoglobulin superfamily. BTN/MOG family. In terms of processing, N-glycosylated.

It localises to the membrane. Its function is as follows. Inhibits the proliferation of CD4 and CD8 T-cells activated by anti-CD3 antibodies, T-cell metabolism and IL2 and IFNG secretion. The sequence is that of Butyrophilin subfamily 2 member A2 (BTN2A2) from Pongo abelii (Sumatran orangutan).